The chain runs to 92 residues: PqqA binding protein (92 aa).

It belongs to the PqqD family. Monomer. Interacts with PqqE.

Its pathway is cofactor biosynthesis; pyrroloquinoline quinone biosynthesis. In terms of biological role, functions as a PqqA binding protein and presents PqqA to PqqE, in the pyrroloquinoline quinone (PQQ) biosynthetic pathway. The sequence is that of PqqA binding protein from Xanthomonas campestris pv. campestris (strain 8004).